Reading from the N-terminus, the 62-residue chain is Large ribosomal subunit protein bL28 (62 aa).

Belongs to the bacterial ribosomal protein bL28 family.

The protein is Large ribosomal subunit protein bL28 of Bacillus velezensis (strain DSM 23117 / BGSC 10A6 / LMG 26770 / FZB42) (Bacillus amyloliquefaciens subsp. plantarum).